We begin with the raw amino-acid sequence, 83 residues long: uncharacterized protein (83 aa).

This is an uncharacterized protein from Schizosaccharomyces pombe (strain 972 / ATCC 24843) (Fission yeast).